The following is a 142-amino-acid chain: Large ribosomal subunit protein uL11 (142 aa).

It belongs to the universal ribosomal protein uL11 family. As to quaternary structure, part of the ribosomal stalk of the 50S ribosomal subunit. Interacts with L10 and the large rRNA to form the base of the stalk. L10 forms an elongated spine to which L12 dimers bind in a sequential fashion forming a multimeric L10(L12)X complex. Post-translationally, one or more lysine residues are methylated.

Its function is as follows. Forms part of the ribosomal stalk which helps the ribosome interact with GTP-bound translation factors. This is Large ribosomal subunit protein uL11 from Lachnoclostridium phytofermentans (strain ATCC 700394 / DSM 18823 / ISDg) (Clostridium phytofermentans).